We begin with the raw amino-acid sequence, 74 residues long: Antimicrobial peptide HsAp4 (74 aa).

A signal peptide spans 1–21; sequence MSRRRILILVLVTMLVKTMAG. The propeptide occupies 22–33; the sequence is MESKWVETTYEI. Residue arginine 65 is modified to Arginine amide. Residues 69–74 constitute a propeptide that is removed on maturation; it reads AISEQT.

This sequence belongs to the non-disulfide-bridged peptide (NDBP) superfamily. Medium-length antimicrobial peptide (group 3) family. Expressed by the venom gland.

It localises to the secreted. The protein localises to the target cell membrane. Its function is as follows. Possesses antimicrobial activity against both Gram-negative and Gram-positive bacteria, as well as against the fungus C.tropicalis. Also possesses a relatively high hemolytic activity. May act by disrupting the integrity of the bacterial cell membrane. This is Antimicrobial peptide HsAp4 from Heterometrus spinifer (Asia giant forest scorpion).